Here is a 428-residue protein sequence, read N- to C-terminus: ETS domain-containing protein Elk-1 (428 aa).

Positions 5–86 form a DNA-binding region, ETS; that stretch reads VTLWQFLLQL…SGQKFVYKFV (82 aa). 3 disordered regions span residues 121 to 149, 165 to 205, and 228 to 358; these read AAPG…ARSS, QSLQ…SPLE, and NLKS…SLLP. Low complexity predominate over residues 177–205; it reads PAVVLPSAAPAGAAAPPSGSRSTSPSPLE. Residues K230, K249, and K254 each participate in a glycyl lysine isopeptide (Lys-Gly) (interchain with G-Cter in SUMO) cross-link. Residues 248 to 261 show a composition bias toward basic and acidic residues; the sequence is VKVEGPKEELEVAG. A Phosphoserine; by MAPK1 modification is found at S324. Residues T336, T353, T363, and T368 each carry the phosphothreonine; by MAPK1 modification. Residues 349 to 399 form a sufficient for interaction with MAD2L2 region; that stretch reads GPALTPSLLPTHTLTPVLLTPSSLPPSIHFWSTLSPIAPRSPAKLSFQFPS. An O-linked (GlcNAc) threonine glycan is attached at T381. S383 carries the phosphoserine; by MAPK1 and MAPK8 modification. S389 carries the post-translational modification Phosphoserine; by MAPK1. T417 bears the Phosphothreonine; by MAPK1 mark. S422 is subject to Phosphoserine; by MAPK1.

The protein belongs to the ETS family. As to quaternary structure, interacts in its sumoylated form with PIAS2/PIASX which enhances its transcriptional activator activity. Interacts with MAD2L2; the interaction is direct and promotes phosphorylation by the kinases MAPK8 and/or MAPK9. Interacts with POU1F1. Sumoylation represses transcriptional activator activity as it results in recruitment of HDAC2 to target gene promoters which leads to decreased histone acetylation and reduced transactivator activity. It also regulates nuclear retention. In terms of processing, on mitogenic stimulation, phosphorylated on C-terminal serine and threonine residues by MAPK1. Ser-383 and Ser-389 are the preferred sites for MAPK1. In vitro, phosphorylation by MAPK1 potentiates ternary complex formation with the serum responses factors, SRE and SRF. Also phosphorylated on Ser-383 by MAPK8 and/or MAKP9. Phosphorylation leads to loss of sumoylation and restores transcriptional activator activity. Phosphorylated and activated by CAMK4, MAPK11, MAPK12 and MAPK14. Upon bFGF stimulus, phosphorylated by PAK1. Phosphorylated by PRP4K at Thr-417; phosphorylation activation ELK1 transcriptional activity. In terms of tissue distribution, lung and testis.

It is found in the nucleus. In terms of biological role, transcription factor that binds to purine-rich DNA sequences. Forms a ternary complex with SRF and the ETS and SRF motifs of the serum response element (SRE) on the promoter region of immediate early genes such as FOS and IER2. Induces target gene transcription upon JNK and MAPK-signaling pathways stimulation. The polypeptide is ETS domain-containing protein Elk-1 (Homo sapiens (Human)).